The sequence spans 3630 residues: Trimeric autotransporter adhesin AtaA (3630 aa).

Positions 1–23 are cleaved as a signal peptide; sequence MNKIYKVIWNATLLAWVAVSELA. Positions 24 to 3487 are surface exposed passenger domain; sequence KGKTKSTTSK…TNQAVVNYLG (3464 aa). Positions 108–315 are N-terminal YadA-like head; that stretch reads SIAIGENAQG…ASDAVTVAQL (208 aa). Positions 316 to 2904 are N-terminal stalk; that stretch reads DKAYDDTNGR…GRAATEEQLK (2589 aa). Residues 2905–3169 are C-terminal YadA-like head; sequence AVITSNITEV…DSDAVNVAQL (265 aa). Residues 3170-3561 form a C-terminal stalk region; it reads KAVGNQVVTT…DVEKKANAGI (392 aa). Residues 3539–3574 are outer membrane translocation of the passenger domain; that stretch reads LDNAFRITNNRIDDVEKKANAGIAAAMALESAPYVP. The next 4 membrane-spanning stretches (beta stranded) occupy residues 3575 to 3585, 3589 to 3599, 3608 to 3614, and 3618 to 3629; these read GKYTYAAGAAY, ENAVGVTLRKT, TGGVAAA, and DASVRIGISGVI. The interval 3575-3630 is translocator domain; the sequence is GKYTYAAGAAYHGGENAVGVTLRKTADNGRWSITGGVAAASQGDASVRIGISGVID.

It belongs to the autotransporter-2 (AT-2) (TC 1.B.40) family. In terms of assembly, homotrimer. Interacts with TpgA.

It is found in the cell surface. The protein resides in the cell outer membrane. In terms of biological role, responsible for autoagglutination, and for adhesion to abiotic and biotic surfaces such as polystyrene (PS), type I collagen, polypropylene (PP), polyvinylchloride (PVC), glass and stainless steel (SS). Adhesion is much stronger than that mediated by Yersinia YadA in a comparative assay. Confers autoagglutination and binding to PS, type I collagen, PP, PVC, glass and SS upon expression in Acinetobacter baylyi strain ADP1. Involved in rapid, irreversible adherence to polyurethane. Forms an unusual biofilm. An extended, surface exposed fiber binds to quartz crystals, PS and glass. It can be removed by washing in distilled water. This Acinetobacter sp. (strain Tol 5) protein is Trimeric autotransporter adhesin AtaA.